The primary structure comprises 186 residues: Acireductone dioxygenase (186 aa).

The interval 1–21 (MSRLSIFPDGSTSMDQSSPTP) is disordered. A compositionally biased stretch (polar residues) spans 10-20 (GSTSMDQSSPT). Positions 103, 105, 109, and 147 each coordinate Fe(2+). 4 residues coordinate Ni(2+): H103, H105, E109, and H147.

This sequence belongs to the acireductone dioxygenase (ARD) family. In terms of assembly, monomer. It depends on Fe(2+) as a cofactor. Ni(2+) is required as a cofactor.

The catalysed reaction is 1,2-dihydroxy-5-(methylsulfanyl)pent-1-en-3-one + O2 = 3-(methylsulfanyl)propanoate + CO + formate + 2 H(+). It catalyses the reaction 1,2-dihydroxy-5-(methylsulfanyl)pent-1-en-3-one + O2 = 4-methylsulfanyl-2-oxobutanoate + formate + 2 H(+). It participates in amino-acid biosynthesis; L-methionine biosynthesis via salvage pathway; L-methionine from S-methyl-5-thio-alpha-D-ribose 1-phosphate: step 5/6. Functionally, catalyzes 2 different reactions between oxygen and the acireductone 1,2-dihydroxy-3-keto-5-methylthiopentene (DHK-MTPene) depending upon the metal bound in the active site. Fe-containing acireductone dioxygenase (Fe-ARD) produces formate and 2-keto-4-methylthiobutyrate (KMTB), the alpha-ketoacid precursor of methionine in the methionine recycle pathway. Ni-containing acireductone dioxygenase (Ni-ARD) produces methylthiopropionate, carbon monoxide and formate, and does not lie on the methionine recycle pathway. The chain is Acireductone dioxygenase from Synechococcus sp. (strain CC9902).